Consider the following 115-residue polypeptide: Toxin-like structure LSTX-D2 (115 aa).

The first 22 residues, 1–22, serve as a signal peptide directing secretion; the sequence is MKVLVLFSVLFLTLFSYSSTEA. A propeptide spanning residues 23–44 is cleaved from the precursor; that stretch reads IDEFDSDAEDDMLSLMANEQVR. 4 cysteine pairs are disulfide-bonded: Cys48–Cys63, Cys55–Cys72, Cys62–Cys87, and Cys74–Cys85.

It belongs to the neurotoxin 19 (CSTX) family. 01 subfamily. As to expression, expressed by the venom gland.

Its subcellular location is the secreted. This Lycosa singoriensis (Wolf spider) protein is Toxin-like structure LSTX-D2.